A 193-amino-acid polypeptide reads, in one-letter code: 2',3'-cyclic-nucleotide 3'-phosphodiesterase (193 aa).

His-40 functions as the Proton donor/acceptor in the catalytic mechanism. Thr-42 provides a ligand contact to substrate. His-129 acts as the Proton donor/acceptor in catalysis. 2 residues coordinate substrate: Ser-131 and Tyr-134.

Belongs to the 2H phosphoesterase superfamily. CPD1 family.

It is found in the golgi apparatus. It catalyses the reaction a nucleoside 2',3'-cyclic phosphate + H2O = a nucleoside 2'-phosphate + H(+). Its function is as follows. Involved in the metabolism of ADP-ribose 1',2'-cyclic phosphate which is produced as a consequence of tRNA splicing. This is 2',3'-cyclic-nucleotide 3'-phosphodiesterase (CPD1) from Phaeosphaeria nodorum (strain SN15 / ATCC MYA-4574 / FGSC 10173) (Glume blotch fungus).